The primary structure comprises 447 residues: Growth/differentiation factor 7 (447 aa).

An N-terminal signal peptide occupies residues 1-19; it reads MDLSAAAALCLWLLSACRP. Residues 20 to 318 constitute a propeptide that is removed on maturation; that stretch reads RDGLEAAAVL…AVTAGRRRRR (299 aa). A glycan (N-linked (GlcNAc...) asparagine) is linked at Asn80. The interval 292–346 is disordered; the sequence is LAAQPPPDPGTGTGSPRAVTAGRRRRRTALAGTRTAQGSGGGAGRGHGRRGRSRC. Over residues 337–346 the composition is skewed to basic residues; that stretch reads GHGRRGRSRC. 3 disulfides stabilise this stretch: Cys346-Cys412, Cys375-Cys444, and Cys379-Cys446.

The protein belongs to the TGF-beta family. In terms of assembly, homodimer; disulfide-linked. As to expression, highly expressed in the primary aera of brain neocortex.

It localises to the secreted. May play an active role in the motor area of the primate neocortex. The polypeptide is Growth/differentiation factor 7 (GDF7) (Chlorocebus aethiops (Green monkey)).